Here is a 457-residue protein sequence, read N- to C-terminus: tRNA modification GTPase MnmE (457 aa).

Residues R24, E81, and K124 each contribute to the (6S)-5-formyl-5,6,7,8-tetrahydrofolate site. Residues 220 to 379 (GIQLVLAGAP…LKQKILHVVG (160 aa)) form the TrmE-type G domain. A K(+)-binding site is contributed by N230. GTP contacts are provided by residues 230-235 (NVGKSS), 249-255 (TPIAGTT), and 274-277 (DTAG). Residue S234 participates in Mg(2+) binding. 3 residues coordinate K(+): T249, I251, and T254. T255 provides a ligand contact to Mg(2+). K457 contacts (6S)-5-formyl-5,6,7,8-tetrahydrofolate.

It belongs to the TRAFAC class TrmE-Era-EngA-EngB-Septin-like GTPase superfamily. TrmE GTPase family. In terms of assembly, homodimer. Heterotetramer of two MnmE and two MnmG subunits. It depends on K(+) as a cofactor.

The protein localises to the cytoplasm. Exhibits a very high intrinsic GTPase hydrolysis rate. Involved in the addition of a carboxymethylaminomethyl (cmnm) group at the wobble position (U34) of certain tRNAs, forming tRNA-cmnm(5)s(2)U34. This is tRNA modification GTPase MnmE from Polynucleobacter asymbioticus (strain DSM 18221 / CIP 109841 / QLW-P1DMWA-1) (Polynucleobacter necessarius subsp. asymbioticus).